A 330-amino-acid polypeptide reads, in one-letter code: GTPase Obg (330 aa).

Residues Met1–Leu159 enclose the Obg domain. The OBG-type G domain occupies Ser160–Lys327. GTP is bound by residues Gly166–Ser173, Phe191–Val195, Asp212–Gly215, Asn279–Asp282, and Ser308–Tyr310. Residues Ser173 and Thr193 each coordinate Mg(2+).

The protein belongs to the TRAFAC class OBG-HflX-like GTPase superfamily. OBG GTPase family. Monomer. Mg(2+) is required as a cofactor.

It localises to the cytoplasm. An essential GTPase which binds GTP, GDP and possibly (p)ppGpp with moderate affinity, with high nucleotide exchange rates and a fairly low GTP hydrolysis rate. Plays a role in control of the cell cycle, stress response, ribosome biogenesis and in those bacteria that undergo differentiation, in morphogenesis control. The sequence is that of GTPase Obg from Rickettsia felis (strain ATCC VR-1525 / URRWXCal2) (Rickettsia azadi).